The chain runs to 640 residues: MHLSELSHPNELHGLSSSELEDVARQIREKHLKTVSTSGGHLGPGLGVVELTLALYQTLDLDHDRVVWDVGHQAYPHKLITGRFNEFHTLRKKDGVAGYLKRSESSFDHFGAGHASTSISAALGMAIARDRQGQNHKCVAVIGDGALTGGMALEAINHAGHLPKTRLLVVLNDNDMSISPPVGALSNHLNRMRLSPPMQFLTGSAEEAVRHLPFMQGQVPAELNRIKEGMKRLAVPKVGAVFEELGFTYMGPVDGHDIGALVRTFQEAHRSEGPVLVHVATTKGKGYPYAEADQVGYHAQSAFDLTTGKSFPAKKPKPPSYSKVFGQTLVKLCEQDSRIVGITAAMATGTGLDLLQKAVPDQYVDVGIAEQHAVTLAAGMACDGLKPVVAIYSTFLQRAYDQLIHDVGIQKLPVTFVLDRAGIVGADGPTHQGQYDISYLRCVPNFTVMAPKDEAELQRMLVTGLRHNGPIALRIPRGSGEGVPCLEDGWEPLEIGRGELLAEGDDLLIVAYGAMVAPAMATAGLLQEQGIRATVVNARFLRPLDEALLVPLAKRIGRVVTMEEGCLAGGFGAAVMEALHDRDVLVPMLRLGIPDQLVDHASPDESKQALGLTPPQMADRICERFGSAFGDRLQRQTLSV.

Thiamine diphosphate-binding positions include His72 and 113–115 (GHA). Asp144 is a Mg(2+) binding site. Thiamine diphosphate-binding positions include 145 to 146 (GA), Asn174, Tyr287, and Glu370. Residue Asn174 coordinates Mg(2+).

It belongs to the transketolase family. DXPS subfamily. Homodimer. It depends on Mg(2+) as a cofactor. Requires thiamine diphosphate as cofactor.

The catalysed reaction is D-glyceraldehyde 3-phosphate + pyruvate + H(+) = 1-deoxy-D-xylulose 5-phosphate + CO2. It functions in the pathway metabolic intermediate biosynthesis; 1-deoxy-D-xylulose 5-phosphate biosynthesis; 1-deoxy-D-xylulose 5-phosphate from D-glyceraldehyde 3-phosphate and pyruvate: step 1/1. In terms of biological role, catalyzes the acyloin condensation reaction between C atoms 2 and 3 of pyruvate and glyceraldehyde 3-phosphate to yield 1-deoxy-D-xylulose-5-phosphate (DXP). The protein is 1-deoxy-D-xylulose-5-phosphate synthase of Synechococcus sp. (strain RCC307).